The primary structure comprises 720 residues: Fatty acid CoA ligase Acsl3 (720 aa).

Residues 21-41 form a helical; Signal-anchor for type III membrane protein membrane-spanning segment; the sequence is ILLYFIHFIISLYTILTYIPF. Over 42 to 720 the chain is Cytoplasmic; sequence YFLCESKQEK…ADIERMYGRK (679 aa). Ser-683 is subject to Phosphoserine.

It belongs to the ATP-dependent AMP-binding enzyme family. Mg(2+) is required as a cofactor.

Its subcellular location is the mitochondrion outer membrane. It is found in the peroxisome membrane. The protein localises to the microsome membrane. It localises to the endoplasmic reticulum membrane. The enzyme catalyses a long-chain fatty acid + ATP + CoA = a long-chain fatty acyl-CoA + AMP + diphosphate. The catalysed reaction is (E)-hexadec-2-enoate + ATP + CoA = (2E)-hexadecenoyl-CoA + AMP + diphosphate. It carries out the reaction (5Z,8Z,11Z,14Z)-eicosatetraenoate + ATP + CoA = (5Z,8Z,11Z,14Z)-eicosatetraenoyl-CoA + AMP + diphosphate. It catalyses the reaction 15-hydroxy-(5Z,8Z,11Z,13E)-eicosatetraenoate + ATP + CoA = 15-hydroxy-(5Z,8Z,11Z,13E)-eicosatetraenoyl-CoA + AMP + diphosphate. The enzyme catalyses 12-hydroxy-(5Z,8Z,10E,14Z)-eicosatetraenoate + ATP + CoA = 12-hydroxy-(5Z,8Z,10E,14Z)-eicosatetraenoyl-CoA + AMP + diphosphate. The catalysed reaction is 5-hydroxy-(6E,8Z,11Z,14Z)-eicosatetraenoate + ATP + CoA = 5-hydroxy-(6E,8Z,11Z,14Z)-eicosatetraenoyl-CoA + AMP + diphosphate. It carries out the reaction 14,15-epoxy-(5Z,8Z,11Z)-eicosatrienoate + ATP + CoA = 14,15-epoxy-(5Z,8Z,11Z)-eicosatrienoyl-CoA + AMP + diphosphate. It catalyses the reaction 11,12-epoxy-(5Z,8Z,14Z)-eicosatrienoate + ATP + CoA = 11,12-epoxy-(5Z,8Z,14Z)-eicosatrienoyl-CoA + AMP + diphosphate. The enzyme catalyses a medium-chain fatty acid + ATP + CoA = a medium-chain fatty acyl-CoA + AMP + diphosphate. The catalysed reaction is hexadecanoate + ATP + CoA = hexadecanoyl-CoA + AMP + diphosphate. It carries out the reaction tetradecanoate + ATP + CoA = tetradecanoyl-CoA + AMP + diphosphate. It catalyses the reaction dodecanoate + ATP + CoA = dodecanoyl-CoA + AMP + diphosphate. The enzyme catalyses octadecanoate + ATP + CoA = octadecanoyl-CoA + AMP + diphosphate. The catalysed reaction is eicosanoate + ATP + CoA = eicosanoyl-CoA + AMP + diphosphate. It carries out the reaction (9Z)-octadecenoate + ATP + CoA = (9Z)-octadecenoyl-CoA + AMP + diphosphate. It catalyses the reaction (9Z)-hexadecenoate + ATP + CoA = (9Z)-hexadecenoyl-CoA + AMP + diphosphate. The enzyme catalyses (9Z,12Z)-octadecadienoate + ATP + CoA = (9Z,12Z)-octadecadienoyl-CoA + AMP + diphosphate. The catalysed reaction is (9Z,12Z,15Z)-octadecatrienoate + ATP + CoA = (9Z,12Z,15Z)-octadecatrienoyl-CoA + AMP + diphosphate. It carries out the reaction (4Z,7Z,10Z,13Z,16Z,19Z)-docosahexaenoate + ATP + CoA = (4Z,7Z,10Z,13Z,16Z,19Z)-docosahexaenoyl-CoA + AMP + diphosphate. It catalyses the reaction (5Z,8Z,11Z,14Z,17Z)-eicosapentaenoate + ATP + CoA = (5Z,8Z,11Z,14Z,17Z)-eicosapentaenoyl-CoA + AMP + diphosphate. The enzyme catalyses a fatty acid + ATP + CoA = a fatty acyl-CoA + AMP + diphosphate. Its function is as follows. Acyl-CoA synthetases (ACSL) activates long-chain fatty acids for both synthesis of cellular lipids, and degradation via beta-oxidation. ACSL3 is required for the incorporation of fatty acids into phosphatidylcholine, the major phospholipid located on the surface of VLDL (very low density lipoproteins). Has mainly an anabolic role in energy metabolism. Mediates hepatic lipogenesis. Preferentially uses myristate, laurate, arachidonate and eicosapentaenoate as substrates. Both isoforms exhibit the same level of activity. This chain is Fatty acid CoA ligase Acsl3, found in Mus musculus (Mouse).